A 346-amino-acid chain; its full sequence is Cyclin-dependent kinase 20 (346 aa).

Residues 4–288 enclose the Protein kinase domain; the sequence is YCILGRIGEG…ASKALLHQYF (285 aa). Residues 10-18 and lysine 33 each bind ATP; that span reads IGEGAHGIV. The Proton acceptor role is filled by aspartate 127.

This sequence belongs to the protein kinase superfamily. CMGC Ser/Thr protein kinase family. CDC2/CDKX subfamily. In terms of assembly, monomer. Interacts with TBC1D32 and MAK.

The protein resides in the nucleus. It is found in the cytoplasm. The protein localises to the cell projection. It localises to the cilium. The catalysed reaction is L-seryl-[protein] + ATP = O-phospho-L-seryl-[protein] + ADP + H(+). It catalyses the reaction L-threonyl-[protein] + ATP = O-phospho-L-threonyl-[protein] + ADP + H(+). Required for high-level Shh responses in the developing neural tube. Together with TBC1D32, controls the structure of the primary cilium by coordinating assembly of the ciliary membrane and axoneme, allowing GLI2 to be properly activated in response to SHH signaling. Involved in cell growth. Activates CDK2, a kinase involved in the control of the cell cycle, by phosphorylating residue 'Thr-160'. In Pongo abelii (Sumatran orangutan), this protein is Cyclin-dependent kinase 20 (CDK20).